Here is a 615-residue protein sequence, read N- to C-terminus: Protein ENHANCED DISEASE RESISTANCE 4 (615 aa).

Disordered stretches follow at residues 46–271, 292–336, and 549–592; these read IAPS…DDDE, YKEQ…GRQG, and THDI…RGSP. Polar residues-rich tracts occupy residues 63-89 and 119-129; these read NEPQSVPETNNVSSSSGQDTVLPSSPG and GDGTNEIQEQE. A coiled-coil region spans residues 104–129; sequence MESTEKELDDLELSNGDGTNEIQEQE. The segment covering 134 to 148 has biased composition (basic and acidic residues); it reads DSEKNEREDNSRLES. Positions 159 to 168 are enriched in low complexity; that stretch reads GSGSSSGSLS. Polar residues-rich tracts occupy residues 296-314 and 552-564; these read GASSSSPFSENRRNGITTY and INANRNSNSTSES. The segment covering 565–577 has biased composition (basic and acidic residues); the sequence is PIDKAPSKPEKLR.

Interacts with RLK902. Binds and recruits EDR1 at the powdery mildew (e.g. G.cichoracearum) penetration site on the plasma membrane. Interacts with CHC2. Expressed in stems and rosette leaves, and weakly in inflorescences. Not detected in roots.

It is found in the cell membrane. It localises to the endosome. In terms of biological role, plays a negative role in salicylic acid (SA)-mediated resistance to powdery mildew (e.g. Golovinomyces cichoracearum). May modulate plant immunity by regulating the relocation of EDR1 by interacting with CHC2 and modulating endocytosis. The sequence is that of Protein ENHANCED DISEASE RESISTANCE 4 from Arabidopsis thaliana (Mouse-ear cress).